We begin with the raw amino-acid sequence, 153 residues long: Peptidoglycan-associated lipoprotein (153 aa).

The N-terminal stretch at 1–19 (MNKFVKSLLVAGSVAALAA) is a signal peptide. The N-palmitoyl cysteine moiety is linked to residue cysteine 20. Residue cysteine 20 is the site of S-diacylglycerol cysteine attachment. The region spanning 40–153 (SVADLQQRYN…SKNRRAVLAY (114 aa)) is the OmpA-like domain. Peptidoglycan binding regions lie at residues 55 to 56 (FD) and 97 to 101 (YNIAL).

It belongs to the Pal lipoprotein family. As to quaternary structure, the Tol-Pal system is composed of five core proteins: the inner membrane proteins TolA, TolQ and TolR, the periplasmic protein TolB and the outer membrane protein Pal. They form a network linking the inner and outer membranes and the peptidoglycan layer.

Its subcellular location is the cell outer membrane. Functionally, part of the Tol-Pal system, which plays a role in outer membrane invagination during cell division and is important for maintaining outer membrane integrity. The protein is Peptidoglycan-associated lipoprotein of Haemophilus influenzae (strain ATCC 51907 / DSM 11121 / KW20 / Rd).